The following is a 585-amino-acid chain: Arginine--tRNA ligase (585 aa).

The 'HIGH' region signature appears at 130–140; the sequence is ANPTGPMHVGH.

Belongs to the class-I aminoacyl-tRNA synthetase family. Monomer.

The protein localises to the cytoplasm. The enzyme catalyses tRNA(Arg) + L-arginine + ATP = L-arginyl-tRNA(Arg) + AMP + diphosphate. The chain is Arginine--tRNA ligase from Methylorubrum extorquens (strain PA1) (Methylobacterium extorquens).